We begin with the raw amino-acid sequence, 22 residues long: FFGSMIGALAKGLPSLISLIKK.

Lys-22 bears the Lysine amide mark.

In terms of tissue distribution, expressed by the skin glands.

The protein localises to the secreted. Antimicrobial peptide. Active against Gram-negative bacterium E.coli (MIC=12.5 uM) and against Gram-positive bacterium S.aureus (MIC=12.5 uM). The sequence is that of Brevinin-1OKa from Nidirana okinavana (Kampira Falls frog).